We begin with the raw amino-acid sequence, 102 residues long: MAPHLLWCPTNGLGLGGSPAGQWGGGSHYRGLVPGEPAGRPPALPLPGLAGLHDHTQLLRMAGQPWLAWGTAAARVSARPTRDCSCTSRCHHACDVVAVTLS.

In terms of tissue distribution, ubiquitous.

This is Putative peripheral benzodiazepine receptor-related protein (TSPO) from Homo sapiens (Human).